We begin with the raw amino-acid sequence, 505 residues long: Putative diacyglycerol O-acyltransferase MT0919 (505 aa).

H167 functions as the Proton acceptor in the catalytic mechanism.

This sequence belongs to the long-chain O-acyltransferase family.

It catalyses the reaction an acyl-CoA + a 1,2-diacyl-sn-glycerol = a triacyl-sn-glycerol + CoA. The protein operates within glycerolipid metabolism; triacylglycerol biosynthesis. This is Putative diacyglycerol O-acyltransferase MT0919 from Mycobacterium tuberculosis (strain CDC 1551 / Oshkosh).